Reading from the N-terminus, the 155-residue chain is 6,7-dimethyl-8-ribityllumazine synthase (155 aa).

5-amino-6-(D-ribitylamino)uracil is bound by residues Phe22, 56 to 58, and 80 to 82; these read AFE and AVI. Position 85 to 86 (85 to 86) interacts with (2S)-2-hydroxy-3-oxobutyl phosphate; the sequence is ST. His88 acts as the Proton donor in catalysis. Position 113 (Phe113) interacts with 5-amino-6-(D-ribitylamino)uracil. Arg127 contributes to the (2S)-2-hydroxy-3-oxobutyl phosphate binding site.

The protein belongs to the DMRL synthase family.

The catalysed reaction is (2S)-2-hydroxy-3-oxobutyl phosphate + 5-amino-6-(D-ribitylamino)uracil = 6,7-dimethyl-8-(1-D-ribityl)lumazine + phosphate + 2 H2O + H(+). It participates in cofactor biosynthesis; riboflavin biosynthesis; riboflavin from 2-hydroxy-3-oxobutyl phosphate and 5-amino-6-(D-ribitylamino)uracil: step 1/2. Functionally, catalyzes the formation of 6,7-dimethyl-8-ribityllumazine by condensation of 5-amino-6-(D-ribitylamino)uracil with 3,4-dihydroxy-2-butanone 4-phosphate. This is the penultimate step in the biosynthesis of riboflavin. This chain is 6,7-dimethyl-8-ribityllumazine synthase, found in Caldicellulosiruptor bescii (strain ATCC BAA-1888 / DSM 6725 / KCTC 15123 / Z-1320) (Anaerocellum thermophilum).